Here is a 325-residue protein sequence, read N- to C-terminus: Acetyl-coenzyme A carboxylase carboxyl transferase subunit alpha (325 aa).

Residues 38 to 292 form the CoA carboxyltransferase C-terminal domain; it reads RLEERLSKLQ…DGILKETLKS (255 aa).

This sequence belongs to the AccA family. In terms of assembly, acetyl-CoA carboxylase is a heterohexamer composed of biotin carboxyl carrier protein (AccB), biotin carboxylase (AccC) and two subunits each of ACCase subunit alpha (AccA) and ACCase subunit beta (AccD).

It localises to the cytoplasm. It catalyses the reaction N(6)-carboxybiotinyl-L-lysyl-[protein] + acetyl-CoA = N(6)-biotinyl-L-lysyl-[protein] + malonyl-CoA. It functions in the pathway lipid metabolism; malonyl-CoA biosynthesis; malonyl-CoA from acetyl-CoA: step 1/1. Component of the acetyl coenzyme A carboxylase (ACC) complex. First, biotin carboxylase catalyzes the carboxylation of biotin on its carrier protein (BCCP) and then the CO(2) group is transferred by the carboxyltransferase to acetyl-CoA to form malonyl-CoA. This Bacillus velezensis (strain DSM 23117 / BGSC 10A6 / LMG 26770 / FZB42) (Bacillus amyloliquefaciens subsp. plantarum) protein is Acetyl-coenzyme A carboxylase carboxyl transferase subunit alpha.